Consider the following 471-residue polypeptide: Putative multidrug resistance protein MdtD (471 aa).

Over 1–11 (MTDLPDSTRWQ) the chain is Periplasmic. A helical membrane pass occupies residues 12–32 (LWIVAFGFFMQSLDTTIVNTA). Topologically, residues 33–48 (LPSMAQSLGESPLHMH) are cytoplasmic. A helical transmembrane segment spans residues 49-69 (MVIVSYVLTVAVMLPASGWLA). Residues 70–76 (DKVGVRN) are Periplasmic-facing. Residues 77–97 (IFFTAIVLFTLGSLFCALSAT) traverse the membrane as a helical segment. At 98–101 (LNEL) the chain is on the cytoplasmic side. The chain crosses the membrane as a helical span at residues 102-124 (LLARALQGVGGAMMVPVGRLTVM). Residues 125 to 137 (KIVPREQYMAAMT) are Periplasmic-facing. A helical membrane pass occupies residues 138–158 (FVTLPGQVGPLLGPALGGLLV). Over 159 to 164 (EYASWH) the chain is Cytoplasmic. A helical membrane pass occupies residues 165-185 (WIFLINIPVGIIGAIATLMLM). The Periplasmic portion of the chain corresponds to 186–196 (PNYTMQTRRFD). The chain crosses the membrane as a helical span at residues 197-217 (LSGFLLLAVGMAVLTLALDGS). Residues 218 to 224 (KGTGLSP) lie on the Cytoplasmic side of the membrane. Residues 225 to 245 (LAIAGLAAIGVVALVLYLLHA) form a helical membrane-spanning segment. At 246–262 (RNNNRALFSLKLFRTRT) the chain is on the periplasmic side. A helical transmembrane segment spans residues 263-283 (FSLGLAGSFAGRIGSGMLPFM). Residues 284–285 (TP) are Cytoplasmic-facing. The helical transmembrane segment at 286–306 (VFLQIGLGFSPFHAGLMMIPM) threads the bilayer. The Periplasmic segment spans residues 307–341 (VLGSMGMKRIVVQVVNRFGYRRVLVATTLGLSLVT). Residues 342 to 362 (LLFMTTALLGWYYVLPFVLFL) form a helical membrane-spanning segment. Over 363–395 (QGMVNSTRFSSMNTLTLKDLPDNLASSGNSLLS) the chain is Cytoplasmic. A helical transmembrane segment spans residues 396–416 (MIMQLSMSIGVTIAGLLLGLF). Topologically, residues 417-430 (GSQHVSVDSSTTQT) are periplasmic. A helical membrane pass occupies residues 431–451 (VFMYTWLSMALIIALPAFIFA). The Cytoplasmic portion of the chain corresponds to 452–471 (RVPNDTHQNVAISRRKRSAQ).

This sequence belongs to the major facilitator superfamily. TCR/Tet family.

The protein localises to the cell inner membrane. This chain is Putative multidrug resistance protein MdtD, found in Escherichia fergusonii (strain ATCC 35469 / DSM 13698 / CCUG 18766 / IAM 14443 / JCM 21226 / LMG 7866 / NBRC 102419 / NCTC 12128 / CDC 0568-73).